The sequence spans 318 residues: Cytochrome f (318 aa).

Positions 1 to 33 are cleaved as a signal peptide; that stretch reads MKNTFSWIKKEITRSISLSLMIYIITRTSISNA. Heme contacts are provided by Tyr34, Cys54, Cys57, and His58. A helical membrane pass occupies residues 284-304; the sequence is VQGLLFFLASVILAQIFLVLK.

This sequence belongs to the cytochrome f family. As to quaternary structure, the 4 large subunits of the cytochrome b6-f complex are cytochrome b6, subunit IV (17 kDa polypeptide, petD), cytochrome f and the Rieske protein, while the 4 small subunits are PetG, PetL, PetM and PetN. The complex functions as a dimer. Heme serves as cofactor.

Its subcellular location is the plastid. It localises to the chloroplast thylakoid membrane. Its function is as follows. Component of the cytochrome b6-f complex, which mediates electron transfer between photosystem II (PSII) and photosystem I (PSI), cyclic electron flow around PSI, and state transitions. The chain is Cytochrome f from Oenothera biennis (German evening primrose).